The chain runs to 40 residues: Dolichyl-diphosphooligosaccharide--protein glycosyltransferase subunit 4 (40 aa).

At 1–4 (MITD) the chain is on the lumenal side. A helical transmembrane segment spans residues 5–25 (VQLAIFSNVLGVFLFLLVVAY). Over 26–40 (HYINANTGKSSIKTK) the chain is Cytoplasmic.

It belongs to the OST4 family. As to quaternary structure, component of the oligosaccharyltransferase (OST) complex.

The protein resides in the endoplasmic reticulum membrane. Its function is as follows. Subunit of the oligosaccharyl transferase (OST) complex that catalyzes the initial transfer of a defined glycan (Glc(3)Man(9)GlcNAc(2) in eukaryotes) from the lipid carrier dolichol-pyrophosphate to an asparagine residue within an Asn-X-Ser/Thr consensus motif in nascent polypeptide chains, the first step in protein N-glycosylation. N-glycosylation occurs cotranslationally and the complex associates with the Sec61 complex at the channel-forming translocon complex that mediates protein translocation across the endoplasmic reticulum (ER). All subunits are required for a maximal enzyme activity. This is Dolichyl-diphosphooligosaccharide--protein glycosyltransferase subunit 4 from Drosophila virilis (Fruit fly).